We begin with the raw amino-acid sequence, 215 residues long: MVDEAEVARMIKKAKEGDKRNFTQTLEFIMVFKDIDIKKGFAINETVQLPKTSSPSTVCVLASGDMGVRAKNAKADMVVDADGLEKLGTNKRESRKFINRYDFFLADTQLMPVVGKVLGQILGPRGKMPTPVAFNAPIESFLERFRSSVRVRARASLSLSCKIGDETMDDADLVANAMAVYGTVEKKLPQGSKNVRQIMVKTSMGSIVKQSGTVA.

Belongs to the universal ribosomal protein uL1 family. Part of the 50S ribosomal subunit.

In terms of biological role, binds directly to 23S rRNA. Probably involved in E site tRNA release. Functionally, protein L1 is also a translational repressor protein, it controls the translation of its operon by binding to its mRNA. This Cenarchaeum symbiosum (strain A) protein is Large ribosomal subunit protein uL1.